The sequence spans 294 residues: Potassium-transporting ATPase subunit beta (294 aa).

Over 1 to 36 (MAALQEKKSCSQRMAEFRHYCWNPDTGQMLGRTPAR) the chain is Cytoplasmic. A helical; Signal-anchor for type II membrane protein transmembrane segment spans residues 37–57 (WVWISLYYAGFYVVMTGLFAL). Topologically, residues 58-294 (CIYVLMQTID…KVEFKLTIQK (237 aa)) are extracellular. N-linked (GlcNAc...) asparagine glycosylation is found at Asn-99, Asn-103, Asn-130, Asn-146, and Asn-161. Cys-131 and Cys-152 form a disulfide bridge. Residues Cys-162 and Cys-178 are joined by a disulfide bond. 2 N-linked (GlcNAc...) asparagine glycosylation sites follow: Asn-193 and Asn-225. Positions 194–294 (NTAPRVDCTF…KVEFKLTIQK (101 aa)) are immunoglobulin-like. Residues Cys-201 and Cys-266 are joined by a disulfide bond.

This sequence belongs to the X(+)/potassium ATPases subunit beta family. In terms of assembly, the ATPase pump is composed of two subunits: alpha (catalytic) and beta (regulatory). Interacts with alpha subunit ATP12A; this interaction is required for the formation of a functionally active pump and targeting at the plasma membrane. Interacts (via N-terminus) with alpha subunit ATP4A (via the P-domain). N-glycosylation is necessary for assembly and functional expression of the pump at the plasma membrane. As to expression, expressed in parietal cells (at protein level).

The protein localises to the apical cell membrane. Its subcellular location is the cell membrane. The beta subunit of the gastric H(+)/K(+) ATPase pump which transports H(+) ions in exchange for K(+) ions across the apical membrane of parietal cells. Plays a structural and regulatory role in the assembly and membrane targeting of a functionally active pump. Within a transport cycle, the transfer of a H(+) ion across the membrane is coupled to ATP hydrolysis and is associated with a transient phosphorylation of the alpha subunit that shifts the pump conformation from inward-facing (E1) to outward-facing state (E2). Interacts with the phosphorylation domain of the alpha subunit and functions as a ratchet, stabilizing the lumenal-open E2 conformation and preventing the reverse reaction of the transport cycle. The chain is Potassium-transporting ATPase subunit beta (Atp4b) from Mus musculus (Mouse).